A 185-amino-acid polypeptide reads, in one-letter code: Protein-lysine palmitoyltransferase CyaC (185 aa).

Active-site residues include H33 and D102.

The protein belongs to the RTX toxin acyltransferase family. As to quaternary structure, homodimer.

The protein localises to the cytoplasm. The catalysed reaction is hexadecanoyl-[ACP] + L-lysyl-[protein] = N(6)-hexadecanoyl-L-lysyl-[protein] + holo-[ACP] + H(+). The enzyme catalyses (9Z)-hexadecenoyl-[ACP] + L-lysyl-[protein] = N(6)-[(9Z)-hexadecenoyl]-L-lysyl-[protein] + holo-[ACP] + H(+). Protein-lysine palmitoyltransferase that catalyzes palmitoylation of the protoxin (CyaA) at two internal lysine residues, thereby converting it to the active toxin. The sequence is that of Protein-lysine palmitoyltransferase CyaC from Bordetella bronchiseptica (strain ATCC BAA-588 / NCTC 13252 / RB50) (Alcaligenes bronchisepticus).